Consider the following 94-residue polypeptide: Co-chaperonin GroES (94 aa).

Belongs to the GroES chaperonin family. In terms of assembly, heptamer of 7 subunits arranged in a ring. Interacts with the chaperonin GroEL.

It localises to the cytoplasm. Together with the chaperonin GroEL, plays an essential role in assisting protein folding. The GroEL-GroES system forms a nano-cage that allows encapsulation of the non-native substrate proteins and provides a physical environment optimized to promote and accelerate protein folding. GroES binds to the apical surface of the GroEL ring, thereby capping the opening of the GroEL channel. The chain is Co-chaperonin GroES from Staphylococcus carnosus (strain TM300).